We begin with the raw amino-acid sequence, 209 residues long: Large ribosomal subunit protein uL3 (209 aa).

The protein belongs to the universal ribosomal protein uL3 family. Part of the 50S ribosomal subunit. Forms a cluster with proteins L14 and L19.

Its function is as follows. One of the primary rRNA binding proteins, it binds directly near the 3'-end of the 23S rRNA, where it nucleates assembly of the 50S subunit. This Nitratidesulfovibrio vulgaris (strain ATCC 29579 / DSM 644 / CCUG 34227 / NCIMB 8303 / VKM B-1760 / Hildenborough) (Desulfovibrio vulgaris) protein is Large ribosomal subunit protein uL3.